A 283-amino-acid chain; its full sequence is Thymidylate synthase (283 aa).

Arg22 contributes to the dUMP binding site. The Nucleophile role is filled by Cys160. Residues 180 to 183 (RSCD), Asn191, and 221 to 223 (HIY) each bind dUMP. A (6R)-5,10-methylene-5,6,7,8-tetrahydrofolate-binding site is contributed by Asp183. Residue Ser282 coordinates (6R)-5,10-methylene-5,6,7,8-tetrahydrofolate.

The protein belongs to the thymidylate synthase family. Bacterial-type ThyA subfamily. As to quaternary structure, homodimer.

The protein localises to the cytoplasm. It carries out the reaction dUMP + (6R)-5,10-methylene-5,6,7,8-tetrahydrofolate = 7,8-dihydrofolate + dTMP. It participates in pyrimidine metabolism; dTTP biosynthesis. Functionally, catalyzes the reductive methylation of 2'-deoxyuridine-5'-monophosphate (dUMP) to 2'-deoxythymidine-5'-monophosphate (dTMP) while utilizing 5,10-methylenetetrahydrofolate (mTHF) as the methyl donor and reductant in the reaction, yielding dihydrofolate (DHF) as a by-product. This enzymatic reaction provides an intracellular de novo source of dTMP, an essential precursor for DNA biosynthesis. This chain is Thymidylate synthase, found in Vibrio vulnificus (strain CMCP6).